We begin with the raw amino-acid sequence, 502 residues long: Protein IWS1 homolog 1 (502 aa).

The span at methionine 1–aspartate 12 shows a compositional bias: basic and acidic residues. Disordered regions lie at residues methionine 1 to lysine 61 and aspartate 87 to glutamate 208. Acidic residues-rich tracts occupy residues glycine 13–phenylalanine 22, glutamine 34–glycine 49, and aspartate 87–glutamate 97. Basic and acidic residues-rich tracts occupy residues asparagine 138–tryptophan 151 and proline 181–proline 194. At tyrosine 185 the chain carries Phosphotyrosine. The TFIIS N-terminal domain occupies threonine 287–lysine 370. A disordered region spans residues valine 385–arginine 434. Residues methionine 401–threonine 417 show a composition bias toward basic and acidic residues.

The protein belongs to the IWS1 family. In terms of assembly, interacts with BZR2/BES1 and SPT6 (via N-terminus). Interacts with ASHH2/SDG8.

It localises to the nucleus. Transcription factor involved in RNA polymerase II (RNAPII) transcription regulation. Involved in transcription elongation. May function at post-recruitment and elongation steps of transcription. May be recruited by BZR2/BES1 to target genes and promote their expression during transcription elongation process. Required for brassinosteroid (BR)-induced gene expression. Required the for regulation of numerous nitrogen-responsive genes in roots. Acts in roots to repress NRT2.1 transcription in response to high nitrogen supply. This repression is associated with an IWS1-dependent increase of trimethylation on 'Lys-27' H3K27me3 at the NRT2.1 locus. The chain is Protein IWS1 homolog 1 from Arabidopsis thaliana (Mouse-ear cress).